The sequence spans 194 residues: MPVPVPRAYPRLSHAIGFDDAPFAREWRGDVRIFGAVYAGPTLHAVVSGRVRRDGRNATDELSRLVTAQAEHLQLVFLQGIALAGFNVVDLGALHARTGLPVLVVARRKPRLDRIRRALLEEVPGGARKWRLIEQAGEMEPCAGLYVQRAGLLLAEAEAALGTFCLTGRIPEPLRTAHLIAGGVTRGSSAGQRV.

The protein belongs to the UPF0215 family.

The protein is UPF0215 protein DR_A0167 of Deinococcus radiodurans (strain ATCC 13939 / DSM 20539 / JCM 16871 / CCUG 27074 / LMG 4051 / NBRC 15346 / NCIMB 9279 / VKM B-1422 / R1).